The sequence spans 148 residues: Deoxyuridine 5'-triphosphate nucleotidohydrolase (148 aa).

Substrate-binding positions include 68 to 70 (RSG), asparagine 81, 85 to 87 (TID), and lysine 95.

It belongs to the dUTPase family. Mg(2+) is required as a cofactor.

The enzyme catalyses dUTP + H2O = dUMP + diphosphate + H(+). It participates in pyrimidine metabolism; dUMP biosynthesis; dUMP from dCTP (dUTP route): step 2/2. This enzyme is involved in nucleotide metabolism: it produces dUMP, the immediate precursor of thymidine nucleotides and it decreases the intracellular concentration of dUTP so that uracil cannot be incorporated into DNA. The protein is Deoxyuridine 5'-triphosphate nucleotidohydrolase of Rickettsia massiliae (strain Mtu5).